Consider the following 305-residue polypeptide: Sulfate adenylyltransferase subunit 2 (305 aa).

Belongs to the PAPS reductase family. CysD subfamily. In terms of assembly, heterodimer composed of CysD, the smaller subunit, and CysN.

It carries out the reaction sulfate + ATP + H(+) = adenosine 5'-phosphosulfate + diphosphate. The protein operates within sulfur metabolism; hydrogen sulfide biosynthesis; sulfite from sulfate: step 1/3. Functionally, with CysN forms the ATP sulfurylase (ATPS) that catalyzes the adenylation of sulfate producing adenosine 5'-phosphosulfate (APS) and diphosphate, the first enzymatic step in sulfur assimilation pathway. APS synthesis involves the formation of a high-energy phosphoric-sulfuric acid anhydride bond driven by GTP hydrolysis by CysN coupled to ATP hydrolysis by CysD. The polypeptide is Sulfate adenylyltransferase subunit 2 (Ectopseudomonas mendocina (strain ymp) (Pseudomonas mendocina)).